A 516-amino-acid polypeptide reads, in one-letter code: Cytochrome P450 monooxygenase lcsI (516 aa).

A helical membrane pass occupies residues 20–42 (ICVAAGCAFALSLLYLYVRALYL). N-linked (GlcNAc...) asparagine glycans are attached at residues asparagine 131, asparagine 184, asparagine 415, asparagine 420, and asparagine 442. A heme-binding site is contributed by cysteine 456.

This sequence belongs to the cytochrome P450 family. Requires heme as cofactor.

The protein localises to the membrane. The protein operates within secondary metabolite biosynthesis. Cytochrome P450 monooxygenase; part of the gene cluster that mediates the biosynthesis of the lipopeptide antibiotics leucinostatins that show extensive biological activities, including antimalarial, antiviral, antibacterial, antifungal, and antitumor activities, as well as phytotoxic. Leucinostatin A contains nine amino acid residues, including the unusual amino acid 4-methyl-L-proline (MePro), 2-amino-6-hydroxy-4-methyl-8-oxodecanoic acid (AHyMeOA), 3-hydroxyleucine (HyLeu), alpha-aminoisobutyric acid (AIB), beta-Ala, a 4-methylhex-2-enoic acid at the N-terminus as well as a N1,N1-dimethylpropane-1,2-diamine (DPD) at the C-terminus. The biosynthesis of leucinostatins is probably initiated with the assembly of 4-methylhex-2-enoic acid by a reducing PKS. Two reducing polyketide synthases, lcsB and lcsC, have been identified in the cluster and it is not clear which is the one that assembles 4-methylhex-2-enoic acid since both contain KS, AT, DH, cMT, ER, KR and ACP domains. The polyketide residue might be transferred to the NRPS lcsA, mediated by two additional enzymes, the acyl-CoA ligase lcsD and the thioesterase lcsE. The linear polyketide carboxylic acid, which is released from PKS, is converted to a CoA thioester by lcsD, and then lcsE hydrolyzes the thiol bond and shuttles the polyketide intermediate to lcsA. The C domain of the first module catalyzed the condensation of 4-methylhex-2-enoic acid and MePro carried by domain A1, followed by successive condensations of nine amino acids to trigger the elongation of the linear peptide. A5 and A6 domains of lcsA are proposed to incorporate leucine, A2 AHyMeOA, and A3 incorporates HyLeu. A4, A7 and A8 incorporate AIB. The AHyMeOA in leucinostatin A activated by the A2 might be produced by the second PKS (lcsB or lcsC) present within the cluster. The MePro is probably produced via leucine cyclization and may originate from a separate pathway, independent of the cluster. Another nonproteinogenic amino acid, beta-Ala, could be produced by an aspartic acid decarboxylase also localized outside of the cluster. Two candidates are VFPBJ_01400 and VFPBJ_10476. The final peptide scaffold may be released by the NAD(P)H-dependent thioester reductase (TE) at the C-terminal region of lcsA. Transamination of the lcsA product by the transaminase lcsP may produce DPD at the C-terminus. Further hydroxylation steps performed alternatively by the cytochrome P450 monooxygenases lcsI, lcsK and lcsN then yield the non-methylated leucinostatins precursor. It is also possible that leucines can be hydroxylated prior to their incorporation into the peptide. Varying extents of methylation then lead to the formation of leucinostatins A and B. In Purpureocillium lilacinum (Paecilomyces lilacinus), this protein is Cytochrome P450 monooxygenase lcsI.